A 329-amino-acid chain; its full sequence is Short-chain dehydrogenase/reductase prx4 (329 aa).

The signal sequence occupies residues 1–21 (MIPRWQPASIALLLHLDTLRC). Positions 58, 60, and 81 each coordinate NADP(+). N-linked (GlcNAc...) asparagine glycosylation is present at asparagine 91. 6 residues coordinate NADP(+): aspartate 98, asparagine 121, lysine 161, tyrosine 194, lysine 198, and threonine 229. The active-site Proton acceptor is the tyrosine 194. Residue lysine 198 is the Lowers pKa of active site Tyr of the active site. The chain crosses the membrane as a helical span at residues 238-258 (GPLMAAGLPVSSAHMVGLAVV).

Belongs to the short-chain dehydrogenases/reductases (SDR) family.

It localises to the membrane. It functions in the pathway sesquiterpene biosynthesis. In terms of biological role, short-chain dehydrogenase/reductase; part of the gene cluster that mediates the biosynthesis of PR-toxin, a bicyclic sesquiterpene belonging to the eremophilane class and acting as a mycotoxin. The first step of the pathway is catalyzed by the aristolochene synthase which performs the cyclization of trans,trans-farnesyl diphosphate (FPP) to the bicyclic sesquiterpene aristolochene. Following the formation of aristolochene, the non-oxygenated aristolochene is converted to the trioxygenated intermediate eremofortin B, via 7-epi-neopetasone. This conversion appears to involve three enzymes, a hydroxysterol oxidase-like enzyme, the quinone-oxidase prx3 that forms the quinone-type-structure in the bicyclic nucleus of aristolochene with the C8-oxo group and the C-3 hydroxyl group, and the P450 monooxygenase prx9 that introduces the epoxide at the double bond between carbons 1 and 2. No monoxy or dioxy-intermediates have been reported to be released to the broth, so these three early oxidative reactions may be coupled together. Eremofortin B is further oxidized by another P450 monooxygenase, that introduces a second epoxide between carbons 7 and 11 prior to acetylation to eremofortin A by the acetyltransferase prx11. The second epoxidation may be performed by a second P450 monooxygenase. After the acetylation step, eremofortin A is converted to eremofortin C and then to PR-toxin. First the conversion of eremofortin A to eremofortin C proceeds by oxidation of the side chain of the molecule at C-12 and is catalyzed by the short-chain oxidoreductase prx1. The cytochrome P450 monooxygenase prx8 also plays a role in this step. The primary alcohol formed at C-12 is finally oxidized by the short-chain alcohol dehydrogenase prx4 that forms PR-toxin. This is Short-chain dehydrogenase/reductase prx4 from Penicillium rubens (strain ATCC 28089 / DSM 1075 / NRRL 1951 / Wisconsin 54-1255) (Penicillium chrysogenum).